The sequence spans 586 residues: U-box domain-containing protein 73 (586 aa).

Positions lysine 21–arginine 122 are disordered. A compositionally biased stretch (low complexity) spans arginine 50 to proline 60. In terms of domain architecture, U-box spans proline 182–leucine 258.

It catalyses the reaction S-ubiquitinyl-[E2 ubiquitin-conjugating enzyme]-L-cysteine + [acceptor protein]-L-lysine = [E2 ubiquitin-conjugating enzyme]-L-cysteine + N(6)-ubiquitinyl-[acceptor protein]-L-lysine.. It participates in protein modification; protein ubiquitination. Its function is as follows. Possesses E3 ubiquitin-protein ligase in vitro. The protein is U-box domain-containing protein 73 (PUB73) of Oryza sativa subsp. japonica (Rice).